The primary structure comprises 95 residues: Aspartyl/glutamyl-tRNA(Asn/Gln) amidotransferase subunit C (95 aa).

Belongs to the GatC family. As to quaternary structure, heterotrimer of A, B and C subunits.

The enzyme catalyses L-glutamyl-tRNA(Gln) + L-glutamine + ATP + H2O = L-glutaminyl-tRNA(Gln) + L-glutamate + ADP + phosphate + H(+). The catalysed reaction is L-aspartyl-tRNA(Asn) + L-glutamine + ATP + H2O = L-asparaginyl-tRNA(Asn) + L-glutamate + ADP + phosphate + 2 H(+). Allows the formation of correctly charged Asn-tRNA(Asn) or Gln-tRNA(Gln) through the transamidation of misacylated Asp-tRNA(Asn) or Glu-tRNA(Gln) in organisms which lack either or both of asparaginyl-tRNA or glutaminyl-tRNA synthetases. The reaction takes place in the presence of glutamine and ATP through an activated phospho-Asp-tRNA(Asn) or phospho-Glu-tRNA(Gln). In Cereibacter sphaeroides (strain ATCC 17023 / DSM 158 / JCM 6121 / CCUG 31486 / LMG 2827 / NBRC 12203 / NCIMB 8253 / ATH 2.4.1.) (Rhodobacter sphaeroides), this protein is Aspartyl/glutamyl-tRNA(Asn/Gln) amidotransferase subunit C.